Consider the following 87-residue polypeptide: Acylphosphatase (87 aa).

The region spanning 2-87 (RLTALVSGTV…ATGLRDFHVY (86 aa)) is the Acylphosphatase-like domain. Active-site residues include R17 and N35.

This sequence belongs to the acylphosphatase family.

It catalyses the reaction an acyl phosphate + H2O = a carboxylate + phosphate + H(+). The protein is Acylphosphatase (acyP) of Deinococcus geothermalis (strain DSM 11300 / CIP 105573 / AG-3a).